A 211-amino-acid polypeptide reads, in one-letter code: Beta-crystallin B3 (211 aa).

Met-1 is subject to N-acetylmethionine. Ala-2 is modified (N-acetylalanine; in Beta-crystallin B3, N-terminally processed). Residues Ala-2–Ser-23 are N-terminal arm. Beta/gamma crystallin 'Greek key' domains follow at residues Tyr-24–Ser-63 and Gly-64–Asn-108. The connecting peptide stretch occupies residues Ile-109 to His-113. Beta/gamma crystallin 'Greek key' domains follow at residues His-114–Asn-155 and Gly-156–Arg-198. Positions Gln-200–Ser-211 are C-terminal arm.

Belongs to the beta/gamma-crystallin family. In terms of assembly, homo/heterodimer, or complexes of higher-order. The structure of beta-crystallin oligomers seems to be stabilized through interactions between the N-terminal arms.

Crystallins are the dominant structural components of the vertebrate eye lens. The polypeptide is Beta-crystallin B3 (CRYBB3) (Homo sapiens (Human)).